Here is a 159-residue protein sequence, read N- to C-terminus: SsrA-binding protein (159 aa).

It belongs to the SmpB family.

The protein localises to the cytoplasm. In terms of biological role, required for rescue of stalled ribosomes mediated by trans-translation. Binds to transfer-messenger RNA (tmRNA), required for stable association of tmRNA with ribosomes. tmRNA and SmpB together mimic tRNA shape, replacing the anticodon stem-loop with SmpB. tmRNA is encoded by the ssrA gene; the 2 termini fold to resemble tRNA(Ala) and it encodes a 'tag peptide', a short internal open reading frame. During trans-translation Ala-aminoacylated tmRNA acts like a tRNA, entering the A-site of stalled ribosomes, displacing the stalled mRNA. The ribosome then switches to translate the ORF on the tmRNA; the nascent peptide is terminated with the 'tag peptide' encoded by the tmRNA and targeted for degradation. The ribosome is freed to recommence translation, which seems to be the essential function of trans-translation. The polypeptide is SsrA-binding protein (Salinispora tropica (strain ATCC BAA-916 / DSM 44818 / JCM 13857 / NBRC 105044 / CNB-440)).